The chain runs to 137 residues: Small ribosomal subunit protein bS16 (137 aa).

This sequence belongs to the bacterial ribosomal protein bS16 family.

This chain is Small ribosomal subunit protein bS16, found in Leuconostoc citreum (strain KM20).